Here is a 612-residue protein sequence, read N- to C-terminus: Isocitrate dehydrogenase kinase/phosphatase (612 aa).

ATP is bound by residues 327–333 (APGIKGL) and lysine 348. Aspartate 383 is a catalytic residue. The segment at 593 to 612 (AGAASNEQDAPDAGRSVRAA) is disordered.

It belongs to the AceK family.

It is found in the cytoplasm. The enzyme catalyses L-seryl-[isocitrate dehydrogenase] + ATP = O-phospho-L-seryl-[isocitrate dehydrogenase] + ADP + H(+). Bifunctional enzyme which can phosphorylate or dephosphorylate isocitrate dehydrogenase (IDH) on a specific serine residue. This is a regulatory mechanism which enables bacteria to bypass the Krebs cycle via the glyoxylate shunt in response to the source of carbon. When bacteria are grown on glucose, IDH is fully active and unphosphorylated, but when grown on acetate or ethanol, the activity of IDH declines drastically concomitant with its phosphorylation. The polypeptide is Isocitrate dehydrogenase kinase/phosphatase (Paraburkholderia xenovorans (strain LB400)).